The sequence spans 200 residues: DNA-directed RNA polymerase subunit 7-like protein (200 aa).

The protein belongs to the eukaryotic RPB7/RPC8 RNA polymerase subunit family.

It is found in the nucleus. The chain is DNA-directed RNA polymerase subunit 7-like protein (NRPB7L) from Arabidopsis thaliana (Mouse-ear cress).